A 464-amino-acid polypeptide reads, in one-letter code: Glutamate--tRNA ligase (464 aa).

The 'HIGH' region motif lies at 9–19 (PSPTGYLHIGG). The 'KMSKS' region signature appears at 242-246 (KISKR). Residue Lys245 coordinates ATP.

This sequence belongs to the class-I aminoacyl-tRNA synthetase family. Glutamate--tRNA ligase type 1 subfamily. As to quaternary structure, monomer.

The protein localises to the cytoplasm. The catalysed reaction is tRNA(Glu) + L-glutamate + ATP = L-glutamyl-tRNA(Glu) + AMP + diphosphate. Functionally, catalyzes the attachment of glutamate to tRNA(Glu) in a two-step reaction: glutamate is first activated by ATP to form Glu-AMP and then transferred to the acceptor end of tRNA(Glu). The sequence is that of Glutamate--tRNA ligase from Neisseria meningitidis serogroup C (strain 053442).